The following is a 728-amino-acid chain: Phosphoribosylformylglycinamidine synthase subunit PurL (728 aa).

Histidine 42 is a catalytic residue. ATP-binding residues include tyrosine 45 and lysine 84. Glutamate 86 lines the Mg(2+) pocket. Substrate contacts are provided by residues 87–90 (SHNH) and arginine 109. Histidine 88 functions as the Proton acceptor in the catalytic mechanism. Position 110 (aspartate 110) interacts with Mg(2+). Glutamine 237 serves as a coordination point for substrate. Residue aspartate 265 participates in Mg(2+) binding. 309–311 (ESQ) contributes to the substrate binding site. Positions 491 and 528 each coordinate ATP. Asparagine 529 contributes to the Mg(2+) binding site. Serine 531 lines the substrate pocket.

The protein belongs to the FGAMS family. Monomer. Part of the FGAM synthase complex composed of 1 PurL, 1 PurQ and 2 PurS subunits.

It is found in the cytoplasm. It catalyses the reaction N(2)-formyl-N(1)-(5-phospho-beta-D-ribosyl)glycinamide + L-glutamine + ATP + H2O = 2-formamido-N(1)-(5-O-phospho-beta-D-ribosyl)acetamidine + L-glutamate + ADP + phosphate + H(+). The protein operates within purine metabolism; IMP biosynthesis via de novo pathway; 5-amino-1-(5-phospho-D-ribosyl)imidazole from N(2)-formyl-N(1)-(5-phospho-D-ribosyl)glycinamide: step 1/2. Part of the phosphoribosylformylglycinamidine synthase complex involved in the purines biosynthetic pathway. Catalyzes the ATP-dependent conversion of formylglycinamide ribonucleotide (FGAR) and glutamine to yield formylglycinamidine ribonucleotide (FGAM) and glutamate. The FGAM synthase complex is composed of three subunits. PurQ produces an ammonia molecule by converting glutamine to glutamate. PurL transfers the ammonia molecule to FGAR to form FGAM in an ATP-dependent manner. PurS interacts with PurQ and PurL and is thought to assist in the transfer of the ammonia molecule from PurQ to PurL. This Campylobacter jejuni (strain RM1221) protein is Phosphoribosylformylglycinamidine synthase subunit PurL.